Reading from the N-terminus, the 160-residue chain is 3-dehydroquinate dehydratase (160 aa).

The active-site Proton acceptor is the Tyr28. Substrate-binding residues include Asn79, His85, and Asp92. Catalysis depends on His105, which acts as the Proton donor. Substrate contacts are provided by residues 106–107 (MS) and Arg116.

Belongs to the type-II 3-dehydroquinase family. In terms of assembly, homododecamer.

It catalyses the reaction 3-dehydroquinate = 3-dehydroshikimate + H2O. The protein operates within metabolic intermediate biosynthesis; chorismate biosynthesis; chorismate from D-erythrose 4-phosphate and phosphoenolpyruvate: step 3/7. Functionally, catalyzes a trans-dehydration via an enolate intermediate. This is 3-dehydroquinate dehydratase from Gloeobacter violaceus (strain ATCC 29082 / PCC 7421).